Reading from the N-terminus, the 533-residue chain is Probable protein kinase UbiB (533 aa).

Residues 24–44 (LILELPMLPWWLRLLGATLPW) traverse the membrane as a helical segment. The region spanning 126–494 (RFEREPLASA…WKGSRHDWLG (369 aa)) is the Protein kinase domain. ATP is bound by residues 132-140 (LASASVAQV) and Lys-154. The active-site Proton acceptor is Asp-289. The helical transmembrane segment at 510–530 (LGQQLEAWPAWVMLAGGVFLI) threads the bilayer.

It belongs to the ABC1 family. UbiB subfamily.

It is found in the cell inner membrane. It functions in the pathway cofactor biosynthesis; ubiquinone biosynthesis [regulation]. Functionally, is probably a protein kinase regulator of UbiI activity which is involved in aerobic coenzyme Q (ubiquinone) biosynthesis. This Pseudomonas aeruginosa (strain ATCC 15692 / DSM 22644 / CIP 104116 / JCM 14847 / LMG 12228 / 1C / PRS 101 / PAO1) protein is Probable protein kinase UbiB.